We begin with the raw amino-acid sequence, 283 residues long: Diaminopimelate epimerase (283 aa).

Substrate contacts are provided by Asn-13 and Asn-66. The active-site Proton donor is Cys-75. Residues 76-77 (GN), Asn-165, Asn-198, and 216-217 (ER) each bind substrate. Cys-225 serves as the catalytic Proton acceptor. Substrate is bound at residue 226–227 (GT).

It belongs to the diaminopimelate epimerase family. Homodimer.

It is found in the cytoplasm. It carries out the reaction (2S,6S)-2,6-diaminopimelate = meso-2,6-diaminopimelate. It functions in the pathway amino-acid biosynthesis; L-lysine biosynthesis via DAP pathway; DL-2,6-diaminopimelate from LL-2,6-diaminopimelate: step 1/1. Catalyzes the stereoinversion of LL-2,6-diaminopimelate (L,L-DAP) to meso-diaminopimelate (meso-DAP), a precursor of L-lysine and an essential component of the bacterial peptidoglycan. This Acaryochloris marina (strain MBIC 11017) protein is Diaminopimelate epimerase.